The chain runs to 355 residues: Green-sensitive opsin (355 aa).

Over Met1–Lys36 the chain is Extracellular. N-linked (GlcNAc...) asparagine glycans are attached at residues Asn2 and Asn15. The chain crosses the membrane as a helical span at residues Tyr37–Val61. Over Thr62–Asn73 the chain is Cytoplasmic. Residues Tyr74–Trp99 traverse the membrane as a helical segment. Residues Asn100–Glu113 lie on the Extracellular side of the membrane. Cys110 and Cys187 are disulfide-bonded. A helical transmembrane segment spans residues Gly114 to Ile133. Residues Glu134–His152 are Cytoplasmic-facing. Residues Ala153–Ser176 form a helical membrane-spanning segment. Topologically, residues Arg177–Ser202 are extracellular. A helical transmembrane segment spans residues Tyr203 to Val230. Residues Arg231–Arg252 lie on the Cytoplasmic side of the membrane. The chain crosses the membrane as a helical span at residues Met253 to Phe276. Residues Thr277–Thr284 are Extracellular-facing. Residues Ala285 to Met309 traverse the membrane as a helical segment. Lys296 bears the N6-(retinylidene)lysine mark. Over Asn310–Ala355 the chain is Cytoplasmic.

Belongs to the G-protein coupled receptor 1 family. Opsin subfamily. Phosphorylated on some or all of the serine and threonine residues present in the C-terminal region. The color pigments are found in the cone photoreceptor cells.

The protein localises to the membrane. Its function is as follows. Visual pigments are the light-absorbing molecules that mediate vision. They consist of an apoprotein, opsin, covalently linked to cis-retinal. This Gallus gallus (Chicken) protein is Green-sensitive opsin (PRA1).